The following is a 589-amino-acid chain: MKTINENAPQVSSWQTYRRLLAFAKPYRLLLVAALIAALIEAAGTTGFLALMKPITDETFIYKNAEVSRWLPVQIILLFVIRGAAGYITDMAMGKSARSIARDLRVKVMSKYLRLPGSRFDSEPVPSMLIRLGSDSDQVAQAAVDAVKVMIQQSLQVIGALALMLWHSWQVTLTILVLAPVLAWVMDKVARRYRRISHSIQESGAHLLQAADQTLSSHQEVKIYGAQQSEMERYSGLADRNLRLAMKVESTRGISTATVQMIGAIGLSALLFVAGAQALAGRLTAGDFVVLMTSMLTIIPGLKQLTNVQNMVQRGLASAERLFSVLDSPDEPDQGQVPLTRAKGLIEFRDVTARYPGQANPALADVSFVAQPGTVTAIVGRSGSGKSSLIKLIPRFYEAESGQILLDGHPVQAYALADLRRQIALVGQQVMLFDGSIAENVAYGEMRQCDAGQLERAIQGANAMEFVAQLPEGLQSHVGTKGGRLSGGQRQRLAIARAMLKDAPILILDEATAALDNESERLVQDALHKLMPDRTTLVIAHRLSTIEHADQVLVMDQGRIVERGTHQELLALGGLYSHLHGMQFRERQA.

5 consecutive transmembrane segments (helical) span residues 29 to 49 (LLLVAALIAALIEAAGTTGFL), 70 to 90 (WLPVQIILLFVIRGAAGYITD), 157 to 177 (VIGALALMLWHSWQVTLTILV), 261 to 281 (MIGAIGLSALLFVAGAQALAG), and 283 to 303 (LTAGDFVVLMTSMLTIIPGLK). The 283-residue stretch at 32 to 314 (VAALIAALIE…LTNVQNMVQR (283 aa)) folds into the ABC transmembrane type-1 domain. One can recognise an ABC transporter domain in the interval 346 to 582 (IEFRDVTARY…GGLYSHLHGM (237 aa)). ATP is bound at residue 380–387 (GRSGSGKS).

Belongs to the ABC transporter superfamily. Lipid exporter (TC 3.A.1.106) family. Homodimer.

Its subcellular location is the cell inner membrane. The enzyme catalyses ATP + H2O + lipid A-core oligosaccharideSide 1 = ADP + phosphate + lipid A-core oligosaccharideSide 2.. In terms of biological role, involved in lipopolysaccharide (LPS) biosynthesis. Translocates lipid A-core from the inner to the outer leaflet of the inner membrane. Transmembrane domains (TMD) form a pore in the inner membrane and the ATP-binding domain (NBD) is responsible for energy generation. This is ATP-dependent lipid A-core flippase from Xanthomonas campestris pv. campestris (strain 8004).